The primary structure comprises 104 residues: MSEARQQSSSEGGGDLSDYEEKFEQCCTLLEQRIIQDDQIPRNVRRAAKQAIEALKEEGQSPGVRASTAISTLEEVVNDQNTPEYARTVLLQVIATLEQVKDEV.

It belongs to the UPF0147 family.

The protein is UPF0147 protein MK1586 of Methanopyrus kandleri (strain AV19 / DSM 6324 / JCM 9639 / NBRC 100938).